A 432-amino-acid polypeptide reads, in one-letter code: Serine/threonine-protein phosphatase 2A activator 1 (432 aa).

Residues 322 to 432 are disordered; it reads PYSKVEDEEP…MAPTKAPWAK (111 aa). Positions 366–389 are enriched in basic and acidic residues; that stretch reads TVERLARRDGQRAAREKEEREDRA. Over residues 396 to 412 the composition is skewed to low complexity; sequence TTGAPGATALPPTRAPG.

The protein belongs to the PTPA-type PPIase family.

It localises to the cytoplasm. The protein resides in the nucleus. It catalyses the reaction [protein]-peptidylproline (omega=180) = [protein]-peptidylproline (omega=0). PPIases accelerate the folding of proteins. It catalyzes the cis-trans isomerization of proline imidic peptide bonds in oligopeptides. Acts as a regulatory subunit for PP2A-like phosphatases modulating their activity or substrate specificity, probably by inducing a conformational change in the catalytic subunit, a direct target of the PPIase. Can reactivate inactive phosphatase PP2A-phosphatase methylesterase complexes (PP2Ai) in presence of ATP and Mg(2+) by dissociating the inactive form from the complex. In Yarrowia lipolytica (strain CLIB 122 / E 150) (Yeast), this protein is Serine/threonine-protein phosphatase 2A activator 1 (RRD1).